Here is a 341-residue protein sequence, read N- to C-terminus: UDP-glucose 4-epimerase (341 aa).

The protein belongs to the polysaccharide synthase family.

The catalysed reaction is UDP-alpha-D-glucose = UDP-alpha-D-galactose. In terms of biological role, epimerizes UDP-galactose to UDP-glucose. May contribute to formation of LPS or the exopolysaccharide slime layer by providing UDP-galactose as a substrate for either molecule. The protein is UDP-glucose 4-epimerase (capD) of Rickettsia prowazekii (strain Madrid E).